A 664-amino-acid polypeptide reads, in one-letter code: Delta-like protein C (664 aa).

The N-terminal stretch at 1-20 (MARVLLTCFFILISSHLGKS) is a signal peptide. Residues 21 to 511 (SGVFELKVLS…VNSPALPAAL (491 aa)) are Extracellular-facing. The DSL domain occupies 154–198 (VVCDEFYHGEECSDFCRPRNDTFGHFNCDAAGNRICLPGWKGDYC). 27 disulfides stabilise this stretch: Cys156-Cys165, Cys169-Cys181, Cys189-Cys198, Cys203-Cys214, Cys207-Cys220, Cys222-Cys231, Cys234-Cys245, Cys240-Cys251, Cys253-Cys262, Cys269-Cys281, Cys275-Cys291, Cys293-Cys302, Cys309-Cys320, Cys314-Cys329, Cys331-Cys340, Cys347-Cys358, Cys352-Cys368, Cys370-Cys379, Cys386-Cys397, Cys391-Cys406, Cys408-Cys417, Cys424-Cys435, Cys429-Cys444, Cys446-Cys455, Cys462-Cys473, Cys467-Cys482, and Cys484-Cys493. Asn173 carries N-linked (GlcNAc...) asparagine glycosylation. EGF-like domains follow at residues 199–232 (TEPI…PLCD), 233–263 (ECTR…LFCN), and 265–303 (DLNF…KNCE). The region spanning 305-341 (ETNECDSNPCKNGGSCNDQENDYTCTCPQGFYGKNCE) is the EGF-like 4; calcium-binding domain. 2 EGF-like domains span residues 343–380 (SAMT…SNCE) and 382–418 (KIDR…SRCE). The EGF-like 7; calcium-binding domain occupies 420 to 456 (NIDDCSSNPCQNAGTCVDGINGYTCTCTLGFSGKDCR). The EGF-like 8 domain maps to 458 to 494 (RSDACSFMPCQNGGTCYTHFSGPVCQCPAGFMGTQCE). Residues 512–532 (IVSFTLGLITLTLVICAAIVV) form a helical membrane-spanning segment. Residues 533-664 (LRQMRQNHKA…IEQRVFATEV (132 aa)) are Cytoplasmic-facing.

Post-translationally, ubiquitinated by mib, leading to its endocytosis and subsequent degradation. In terms of tissue distribution, strongly expressed in the early retina, where it precedes other delta proteins. Also expressed in cranial ganglia, in sensory epithelia including ear and lateral line and in scattered epidermal cells. In the mesoderm, expression is visible by 50% epiboly; it is expressed subsequently in the tail bud, in stripes in the presomitic mesoderm and in the posterior half of each somite. Also expressed in notochord, blood vessels and pronephros. In contrast to other delta proteins, it is not expressed in the majority of nascent primary neurons. In somites, it marks the posterior part of each formed somite, while deltaD (dld) marks the anterior part.

The protein resides in the membrane. Functionally, acts as a ligand for Notch receptors and is involved in somitogenesis. Can activate Notch receptors. Required in somite segmentation to keep the oscillations of neighboring presomitic mesoderm cells synchronized. In Danio rerio (Zebrafish), this protein is Delta-like protein C (dlc).